The following is a 541-amino-acid chain: MAKTIAYDEEARRGLERGLNALADAVKVTLGPKGRNVVLEKKWGAPTITNDGVSIAKEIELEDPYEKIGAELVKEVAKKTDDVAGDGTTTATVLAQALVREGLRNVAAGANPLGLKRGIEKAVEKVTETLLKSAKEVETKDQIAATAAISAGDQSIGDLIAEAMDKVGNEGVITVEESNTFGLQLELTEGMRFDKGYISGYFVTDAERQEAVLEDPFILLVSSKVSTVKDLLPLLEKVIQAGKPLLIIAEDVEGEALSTLVVNKIRGTFKSVAVKAPGFGDRRKAMLQDMAILTGGQVISEEVGLSLESADISLLGKARKVVVTKDETTIVEGAGDSDAIAGRVAQIRTEIENSDSDYDREKLQERLAKLAGGVAVIKAGAATEVELKERKHRIEDAVRNAKAAVEEGIVAGGGVALLHAIPALDELKLEGDEATGANIVRVALEAPLKQIAFNGGLEPGVVAEKVRNSPAGTGLNAATGEYEDLLKAGVADPVKVTRSALQNAASIAGLFLTTEAVVADKPEKAAAPAGDPTGGMGGMDF.

Residues 29–32 (TLGP), 86–90 (DGTTT), glycine 413, 476–478 (NAA), and aspartate 492 contribute to the ATP site.

Belongs to the chaperonin (HSP60) family. In terms of assembly, forms a cylinder of 14 subunits composed of two heptameric rings stacked back-to-back. Interacts with the co-chaperonin GroES.

The protein resides in the secreted. It localises to the capsule. The protein localises to the cell surface. It is found in the cell wall. The enzyme catalyses ATP + H2O + a folded polypeptide = ADP + phosphate + an unfolded polypeptide.. Functionally, together with its co-chaperonin GroES, plays an essential role in assisting protein folding. The GroEL-GroES system forms a nano-cage that allows encapsulation of the non-native substrate proteins and provides a physical environment optimized to promote and accelerate protein folding. The sequence is that of Chaperonin GroEL 2 from Mycobacterium avium (strain 104).